The following is a 316-amino-acid chain: N-acetyl-gamma-glutamyl-phosphate reductase (316 aa).

Cysteine 136 is an active-site residue.

It belongs to the NAGSA dehydrogenase family. Type 1 subfamily.

Its subcellular location is the cytoplasm. It catalyses the reaction N-acetyl-L-glutamate 5-semialdehyde + phosphate + NADP(+) = N-acetyl-L-glutamyl 5-phosphate + NADPH + H(+). It functions in the pathway amino-acid biosynthesis; L-arginine biosynthesis; N(2)-acetyl-L-ornithine from L-glutamate: step 3/4. Functionally, catalyzes the NADPH-dependent reduction of N-acetyl-5-glutamyl phosphate to yield N-acetyl-L-glutamate 5-semialdehyde. This chain is N-acetyl-gamma-glutamyl-phosphate reductase, found in Xanthomonas campestris pv. campestris (strain B100).